Consider the following 807-residue polypeptide: Leucine--tRNA ligase (807 aa).

Positions 40–51 match the 'HIGH' region motif; that stretch reads PYPSGSGLHVGH. Positions 576-580 match the 'KMSKS' region motif; sequence KMSKS. ATP is bound at residue Lys-579.

The protein belongs to the class-I aminoacyl-tRNA synthetase family.

It localises to the cytoplasm. The enzyme catalyses tRNA(Leu) + L-leucine + ATP = L-leucyl-tRNA(Leu) + AMP + diphosphate. The polypeptide is Leucine--tRNA ligase (Chlorobaculum parvum (strain DSM 263 / NCIMB 8327) (Chlorobium vibrioforme subsp. thiosulfatophilum)).